A 120-amino-acid polypeptide reads, in one-letter code: Immunoglobulin kappa variable 2D-28 (120 aa).

Residues 1 to 19 (MRLPAQLLGLLMLWVSGSS) form the signal peptide. The Ig-like domain maps to 20–120 (GDIVMTQSPL…YYCMQALQTP (101 aa)). The interval 21–43 (DIVMTQSPLSLPVTPGEPASISC) is framework-1. Residues C43 and C113 are joined by a disulfide bond. Positions 44–59 (RSSQSLLHSNGYNYLD) are complementarity-determining-1. The framework-2 stretch occupies residues 60–74 (WYLQKPGQSPQLLIY). A complementarity-determining-2 region spans residues 75–81 (LGSNRAS). Residues 82–113 (GVPDRFSGSGSGTDFTLKISRVEAEDVGVYYC) form a framework-3 region. Residues 114 to 120 (MQALQTP) are complementarity-determining-3.

In terms of assembly, immunoglobulins are composed of two identical heavy chains and two identical light chains; disulfide-linked.

The protein resides in the secreted. The protein localises to the cell membrane. Functionally, v region of the variable domain of immunoglobulin light chains that participates in the antigen recognition. Immunoglobulins, also known as antibodies, are membrane-bound or secreted glycoproteins produced by B lymphocytes. In the recognition phase of humoral immunity, the membrane-bound immunoglobulins serve as receptors which, upon binding of a specific antigen, trigger the clonal expansion and differentiation of B lymphocytes into immunoglobulins-secreting plasma cells. Secreted immunoglobulins mediate the effector phase of humoral immunity, which results in the elimination of bound antigens. The antigen binding site is formed by the variable domain of one heavy chain, together with that of its associated light chain. Thus, each immunoglobulin has two antigen binding sites with remarkable affinity for a particular antigen. The variable domains are assembled by a process called V-(D)-J rearrangement and can then be subjected to somatic hypermutations which, after exposure to antigen and selection, allow affinity maturation for a particular antigen. The protein is Immunoglobulin kappa variable 2D-28 of Homo sapiens (Human).